The chain runs to 491 residues: MAAVREVGSKAELEAAAGGARAAAVHFWAAWCEASKQMDEVFAHLAVDFSHAVFLRVEAEEQPEISEAYGVTAVPYFVFLKEGKTVDTLEGANPASLANKVAKLAGPASVAESAVPASLGVAAGPAVLEKVQEMAQQNGASATSSAEDALNKRLEQLVNSHPVFLFMKGTPEQPRCGFSRKVVDVLKQEGVEFGSFDILTDNDVREGMKKFSNWPTFPQLYCKGELLGGCDIVIAMHESGELKDVFKEHNIPLQPQGSKNEEAVKAKPDTEKSGAVSEPALLTAAQKERLESLVNFSTVMAFIKGTPEEPKCGFSGKLVHILKQEKIPFSSFDILTDDEVRQGLKLLSNWPSYPQLYINGELVGGSDIVMEMHKSGELKKVLSEKGIVAKESLEDRLKALISSAPVMLFMKGTPDAPRCGFSSKVVNALKQAGVSFGAFDILSDEEVRQGLKTYSNWPTFPQLYYKSELIGGCDIVLELEKSGELKSTLSE.

3 Glutaredoxin domains span residues 151–253 (NKRL…NIPL), 287–389 (KERL…GIVA), and 394–491 (EDRL…TLSE). Lys411 is a glutathione binding site. A [2Fe-2S] cluster-binding site is contributed by Cys419. Glutathione contacts are provided by residues Arg448, Phe460, and 473–474 (CD).

This sequence belongs to the glutaredoxin family. CGFS subfamily.

The protein localises to the cytoplasm. May only reduce GSH-thiol disulfides, but not protein disulfides. The protein is Monothiol glutaredoxin-S11 (GRXS11) of Oryza sativa subsp. japonica (Rice).